Reading from the N-terminus, the 458-residue chain is Argininosuccinate lyase (458 aa).

The protein belongs to the lyase 1 family. Argininosuccinate lyase subfamily.

It localises to the cytoplasm. It carries out the reaction 2-(N(omega)-L-arginino)succinate = fumarate + L-arginine. The protein operates within amino-acid biosynthesis; L-arginine biosynthesis; L-arginine from L-ornithine and carbamoyl phosphate: step 3/3. This Lachnospira eligens (strain ATCC 27750 / DSM 3376 / VPI C15-48 / C15-B4) (Eubacterium eligens) protein is Argininosuccinate lyase.